Consider the following 379-residue polypeptide: Anomalous homeobox protein (379 aa).

The segment at residues 135–196 (PEGLKSRNFP…NYRRRQRALP (62 aa)) is a DNA-binding region (homeobox). Residues 195 to 283 (LPQHMKPAQQ…SKPLDVSGHP (89 aa)) form a disordered region. Residues 237–246 (QWSEEREEKG) are compositionally biased toward basic and acidic residues.

The protein resides in the nucleus. This chain is Anomalous homeobox protein (ANHX), found in Homo sapiens (Human).